Consider the following 204-residue polypeptide: Large ribosomal subunit protein uL22c (204 aa).

This sequence belongs to the universal ribosomal protein uL22 family. In terms of assembly, part of the 50S ribosomal subunit.

It is found in the plastid. The protein localises to the chloroplast. Functionally, this protein binds specifically to 23S rRNA. The globular domain of the protein is located near the polypeptide exit tunnel on the outside of the subunit, while an extended beta-hairpin is found that lines the wall of the exit tunnel in the center of the 70S ribosome. The sequence is that of Large ribosomal subunit protein uL22c (rpl22) from Pisum sativum (Garden pea).